Here is a 262-residue protein sequence, read N- to C-terminus: Indole-3-glycerol phosphate synthase (262 aa).

This sequence belongs to the TrpC family.

It carries out the reaction 1-(2-carboxyphenylamino)-1-deoxy-D-ribulose 5-phosphate + H(+) = (1S,2R)-1-C-(indol-3-yl)glycerol 3-phosphate + CO2 + H2O. The protein operates within amino-acid biosynthesis; L-tryptophan biosynthesis; L-tryptophan from chorismate: step 4/5. The chain is Indole-3-glycerol phosphate synthase from Nitratiruptor sp. (strain SB155-2).